The chain runs to 692 residues: Non-hemolytic phospholipase C (692 aa).

Residues 1–35 constitute a signal peptide (tat-type signal); that stretch reads MISKSRRSFIRLAAGTVGATVATSMLPSSIQAALA.

It belongs to the bacterial phospholipase C family. In terms of processing, predicted to be exported by the Tat system. The position of the signal peptide cleavage has not been experimentally proven.

The catalysed reaction is a 1,2-diacyl-sn-glycero-3-phosphocholine + H2O = phosphocholine + a 1,2-diacyl-sn-glycerol + H(+). Its function is as follows. Hydrolyzes phosphatidylserine as well as phosphatidylcholine. This Pseudomonas aeruginosa (strain ATCC 15692 / DSM 22644 / CIP 104116 / JCM 14847 / LMG 12228 / 1C / PRS 101 / PAO1) protein is Non-hemolytic phospholipase C (plcN).